A 314-amino-acid polypeptide reads, in one-letter code: Ketimine reductase mu-crystallin (314 aa).

3,3',5-triiodo-L-thyronine is bound at residue Arg-47. The NADPH site is built by Ser-91, His-92, Arg-119, Ala-144, Val-146, Gln-147, Asn-168, Arg-169, Thr-170, Asn-173, Thr-205, Met-206, and Val-226. Glu-257 contacts 3,3',5-triiodo-L-thyronine. Ser-292 contributes to the NADPH binding site.

It belongs to the ornithine cyclodeaminase/mu-crystallin family. In terms of assembly, homodimer. Binds the thyroid hormone triiodothyronine (T3); T3 binding inhibits enzymatic activity. As to expression, expressed at high abundance in lens, but outside the lens it is preferentially expressed in neural tissues, retina and brain.

The protein localises to the cytoplasm. The enzyme catalyses L-pipecolate + NADP(+) = Delta(1)-piperideine-2-carboxylate + NADPH + H(+). The catalysed reaction is L-pipecolate + NAD(+) = Delta(1)-piperideine-2-carboxylate + NADH + H(+). It carries out the reaction L-proline + NADP(+) = 1-pyrroline-2-carboxylate + NADPH + H(+). It catalyses the reaction L-proline + NAD(+) = 1-pyrroline-2-carboxylate + NADH + H(+). The enzyme catalyses (3R)-1,4-thiomorpholine-3-carboxylate + NAD(+) = 3,4-dehydrothiomorpholine-3-carboxylate + NADH + 2 H(+). The catalysed reaction is (3R)-1,4-thiomorpholine-3-carboxylate + NADP(+) = 3,4-dehydrothiomorpholine-3-carboxylate + NADPH + 2 H(+). It carries out the reaction (S)-cystathionine ketimine + NADH + 2 H(+) = (3R,5S)-2,3,5,6,7-pentahydro-1,4-thiazepine-3,5-dicarboxylate + NAD(+). It catalyses the reaction (S)-cystathionine ketimine + NADPH + 2 H(+) = (3R,5S)-2,3,5,6,7-pentahydro-1,4-thiazepine-3,5-dicarboxylate + NADP(+). The enzyme catalyses (R)-lanthionine ketimine + NADPH + 2 H(+) = (3R,5R)-1,4-thiomorpholine-3,5-dicarboxylate + NADP(+). The catalysed reaction is Delta(2)-thiazoline-2-carboxylate + NADPH + 2 H(+) = L-thiazolidine-2-carboxylate + NADP(+). Functionally, catalyzes the NAD(P)H-dependent reduction of imine double bonds of a number of cyclic ketimine substrates, including sulfur-containing cyclic ketimines. Under physiological conditions, it efficiently catalyzes delta(1)-piperideine-2-carboxylate (P2C) and delta(1)-pyrroline-2-carboxylate (Pyr2C) reduction, suggesting a central role in lysine and glutamate metabolism. Additional substrates are delta(2)-thiazoline-2-carboxylate (T2C), 3,4-dehydrothiomorpholine-3-carboxylate (AECK), and (R)-lanthionine ketimine (LK) that is reduced at very low rate compared to other substrates. Also catalyzes the NAD(P)H-dependent reduction of (S)-cystathionine ketimine (CysK). The chain is Ketimine reductase mu-crystallin (CRYM) from Macropus fuliginosus (Western gray kangaroo).